The chain runs to 584 residues: DNA damage-binding protein CMR1 (584 aa).

The segment covering 29 to 44 has biased composition (polar residues); the sequence is SATDSISREIPNQRQA. A disordered region spans residues 29–90; the sequence is SATDSISREI…TEEYQKVKEE (62 aa). Residues 59–68 show a composition bias toward basic and acidic residues; sequence IKKEPQEPSR. Positions 76 to 110 form a coiled coil; it reads VTMENTEEYQKVKEEMEEAERKKKELEKLKSTRLF. 6 WD repeats span residues 226–267, 274–314, 373–413, 431–469, 506–549, and 553–584; these read ITHQ…DEDP, PHGR…SSEV, LHDK…KSNS, SSRL…SELP, GRWV…LAHL, and EKVG…YLFE.

Belongs to the WD repeat DDB2/WDR76 family.

DNA-binding protein that binds to both single- and double-stranded DNA. Binds preferentially to UV-damaged DNA. May be involved in DNA-metabolic processes. This Debaryomyces hansenii (strain ATCC 36239 / CBS 767 / BCRC 21394 / JCM 1990 / NBRC 0083 / IGC 2968) (Yeast) protein is DNA damage-binding protein CMR1.